Here is a 470-residue protein sequence, read N- to C-terminus: MAPTEIKTLSFLDSSKSNYNLNPLKFQGGFAFKRKDSGCTAAKRVHCSAQSQSPPPAWPGRAFPEPGRMTWEGPKPISVIGSTGSIGTQTLDIVAENPDKFRIVALAAGSNVTLLADQVKAFKPKLVSVKDESLISELKEALAGFEDMPEIIPGEQGMIEVARHPDAVTVVTGIVGCAGLKPTVAAIEAGKDIALANKETLIAGGPFVLPLAKKHNVKILPADSEHSAIFQCIQGLPEGALRRIILTASGGAFRDLPVEKLKEVKVADALKHPNWNMGKKITVDSATLFNKGLEVIEAHYLFGAEYDDIEIVIHPQSIIHSMVETQDSSVLAQLGWPDMRLPILYTLSWPERIYCSEITWPRLDLCKVDLTFKKPDNVKYPSMDLAYAAGRAGGTMTGVLSAANEKAVEMFIDEKIGYLDIFKVVELTCDKHRSEMAVSPSLEEIVHYDQWARDYAATVLKSAGLSPALV.

Positions 83, 84, 85, 86, 109, 111, and 197 each coordinate NADPH. Lys-198 contacts 1-deoxy-D-xylulose 5-phosphate. Glu-199 provides a ligand contact to NADPH. Asp-223 lines the Mn(2+) pocket. Positions 224, 225, 249, and 272 each coordinate 1-deoxy-D-xylulose 5-phosphate. Glu-225 serves as a coordination point for Mn(2+). Gly-278 contacts NADPH. The 1-deoxy-D-xylulose 5-phosphate site is built by Ser-285, Asn-290, Lys-291, and Glu-294. Glu-294 serves as a coordination point for Mn(2+).

It belongs to the DXR family. Mn(2+) is required as a cofactor. Requires Mg(2+) as cofactor.

Its subcellular location is the plastid. The protein resides in the chloroplast. The catalysed reaction is 2-C-methyl-D-erythritol 4-phosphate + NADP(+) = 1-deoxy-D-xylulose 5-phosphate + NADPH + H(+). It participates in isoprenoid biosynthesis; isopentenyl diphosphate biosynthesis via DXP pathway; isopentenyl diphosphate from 1-deoxy-D-xylulose 5-phosphate: step 1/6. Its function is as follows. Catalyzes the NADPH-dependent rearrangement and reduction of 1-deoxy-D-xylulose-5-phosphate (DXP) to 2-C-methyl-D-erythritol 4-phosphate (MEP). The sequence is that of 1-deoxy-D-xylulose 5-phosphate reductoisomerase, chloroplastic (DXR) from Mentha piperita (Peppermint).